Reading from the N-terminus, the 215-residue chain is 24 kDa Ras-like protein (215 aa).

17–24 (GGGGVGKS) lines the GTP pocket. The Effector region signature appears at 39–47 (YDPTIEDSY). GTP-binding positions include 64–68 (DTAGQ) and 123–126 (NKCD). Positions 179–199 (QTGRPAIAAGGGGPAGSYTQD) are disordered. A Cysteine methyl ester modification is found at Cys212. A lipid anchor (S-farnesyl cysteine) is attached at Cys212. The propeptide at 213 to 215 (VIA) is removed in mature form.

Belongs to the small GTPase superfamily. Ras family.

Its subcellular location is the cell membrane. The catalysed reaction is GTP + H2O = GDP + phosphate + H(+). Its function is as follows. Ras proteins bind GDP/GTP and possess intrinsic GTPase activity. This chain is 24 kDa Ras-like protein (CC-RAS), found in Coprinopsis cinerea (strain Okayama-7 / 130 / ATCC MYA-4618 / FGSC 9003) (Inky cap fungus).